Here is a 151-residue protein sequence, read N- to C-terminus: C-C motif chemokine 25 (151 aa).

The signal sequence occupies residues 1–23 (MRPWLLACLVACFVGAWAPAIHA). Intrachain disulfides connect cysteine 30-cysteine 58 and cysteine 31-cysteine 75. Residues 93 to 151 (RNKKDSKPHHSGRRFFQGPQSGVRKLSSGTSRPLLLKFSGPTRSSKRKASLLTTAIPGP) form a disordered region.

It belongs to the intercrine beta (chemokine CC) family.

The protein localises to the secreted. Potentially involved in T-cell development. Recombinant protein shows chemotactic activity on thymocytes, macrophages, THP-1 cells, and dendritics cells but is inactive on peripheral blood lymphocytes and neutrophils. Binds to CCR9. Binds to atypical chemokine receptor ACKR4 and mediates the recruitment of beta-arrestin (ARRB1/2) to ACKR4. The protein is C-C motif chemokine 25 (CCL25) of Sus scrofa (Pig).